The chain runs to 104 residues: UPF0473 protein LGAS_0424 (104 aa).

It belongs to the UPF0473 family.

The chain is UPF0473 protein LGAS_0424 from Lactobacillus gasseri (strain ATCC 33323 / DSM 20243 / BCRC 14619 / CIP 102991 / JCM 1131 / KCTC 3163 / NCIMB 11718 / NCTC 13722 / AM63).